The chain runs to 314 residues: Testis-specific Y-encoded protein 9 (314 aa).

It belongs to the nucleosome assembly protein (NAP) family.

It is found in the cytoplasm. Its subcellular location is the nucleus. Its function is as follows. May be involved in sperm differentiation and proliferation. The polypeptide is Testis-specific Y-encoded protein 9 (Homo sapiens (Human)).